The following is a 170-amino-acid chain: Prenyl-diphosphate phosphatase (170 aa).

The Nudix hydrolase domain occupies His-25 to Glu-155. The Nudix box signature appears at Tyr-59–Gly-83. Residues Glu-77 and Glu-81 each contribute to the Mg(2+) site.

Belongs to the Nudix hydrolase family. Mg(2+) is required as a cofactor.

It carries out the reaction dimethylallyl diphosphate + H2O = dimethylallyl phosphate + phosphate + H(+). The enzyme catalyses isopentenyl diphosphate + H2O = isopentenyl phosphate + phosphate + H(+). It catalyses the reaction (2E,6E)-farnesyl diphosphate + H2O = (2E,6E)-farnesyl phosphate + phosphate + H(+). The catalysed reaction is (2E)-geranyl diphosphate + H2O = (2E)-geranyl phosphate + phosphate + H(+). The protein operates within isoprenoid biosynthesis. Functionally, hydrolyzes homoallylic isopentenyl diphosphate (IPP), its allylic isomer dimethylallyl diphosphate (DMAPP) and short-chain prenyl diphosphates geranyl diphosphate (GPP) and farnesyl diphosphate (FPP) to their corresponding monophosphate forms with high activity. The preferred substrate is IPP. ADP, NADPH, Ap5A and thiamine diphosphate (TPP) are weakly hydrolyzed. No hydrolysis with ATP, dNTPs, 8-OH-dGTP, NAD+, FAD or acetyl-CoA. The likely physiological role of this enzyme is to provide a substrate dimethylallyl phosphate (DMAP) for prenylated flavin mononucleotide (prenyl-FMN) synthase MM_1871 involved in the biosynthesis of prenyl-FMN, a coenzyme required in the archaea-specific mevalonate pathway. In Methanosarcina mazei (strain ATCC BAA-159 / DSM 3647 / Goe1 / Go1 / JCM 11833 / OCM 88) (Methanosarcina frisia), this protein is Prenyl-diphosphate phosphatase.